The sequence spans 130 residues: MVRMNVLADALKSINNAEKRGKRQVLIRPCSKVIVRFLTVMMKHGYIGEFEIIDDHRAGKIVVNLTGRLNKCGVISPRFDVQLKDLEKWQNNLLPSRQFGFIVLTTSAGIMDHEEARRKHTGGKILGFFF.

Lysine 88 is subject to N6-succinyllysine.

Belongs to the universal ribosomal protein uS8 family. As to quaternary structure, component of the small ribosomal subunit. Part of the small subunit (SSU) processome, composed of more than 70 proteins and the RNA chaperone small nucleolar RNA (snoRNA) U3.

The protein localises to the cytoplasm. The protein resides in the nucleus. It localises to the nucleolus. Component of the small ribosomal subunit. The ribosome is a large ribonucleoprotein complex responsible for the synthesis of proteins in the cell. Part of the small subunit (SSU) processome, first precursor of the small eukaryotic ribosomal subunit. During the assembly of the SSU processome in the nucleolus, many ribosome biogenesis factors, an RNA chaperone and ribosomal proteins associate with the nascent pre-rRNA and work in concert to generate RNA folding, modifications, rearrangements and cleavage as well as targeted degradation of pre-ribosomal RNA by the RNA exosome. Required for proper erythropoiesis. The sequence is that of Small ribosomal subunit protein uS8 (Rps15a) from Mus musculus (Mouse).